We begin with the raw amino-acid sequence, 46 residues long: Elongation factor Tu (46 aa).

Positions 1 to 10 (MAKGKFERSK) are enriched in basic and acidic residues. The segment at 1-20 (MAKGKFERSKPHVNVGTIGH) is disordered. 19-26 (GHVDHGKT) contributes to the GTP binding site.

Belongs to the GTP-binding elongation factor family. EF-Tu/EF-1A subfamily. In terms of assembly, monomer.

The protein localises to the cytoplasm. This protein promotes the GTP-dependent binding of aminoacyl-tRNA to the A-site of ribosomes during protein biosynthesis. In Eikenella corrodens, this protein is Elongation factor Tu (tufA).